We begin with the raw amino-acid sequence, 349 residues long: Variable large protein 19 (349 aa).

Residues 1-18 form the signal peptide; sequence MRKRISAIIMTLFMVLVS. Cys19 carries N-palmitoyl cysteine lipidation. Cys19 is lipidated: S-diacylglycerol cysteine.

The protein belongs to the variable large protein (Vlp) family. Gamma subfamily.

The protein localises to the cell outer membrane. In terms of biological role, the Vlp and Vsp proteins are antigenically distinct proteins, only one vlp or vsp gene is transcriptionally active at any one time. Switching between these genes is a mechanism of host immune response evasion. In Borrelia hermsii, this protein is Variable large protein 19.